Here is a 275-residue protein sequence, read N- to C-terminus: Diaminopimelate epimerase (275 aa).

3 residues coordinate substrate: Asn-13, Gln-46, and Asn-65. Catalysis depends on Cys-74, which acts as the Proton donor. Substrate-binding positions include 75–76 (GN), Asn-158, Asn-191, and 209–210 (ER). Residue Cys-218 is the Proton acceptor of the active site. Residue 219 to 220 (GT) participates in substrate binding.

This sequence belongs to the diaminopimelate epimerase family. In terms of assembly, homodimer.

The protein localises to the cytoplasm. The enzyme catalyses (2S,6S)-2,6-diaminopimelate = meso-2,6-diaminopimelate. It participates in amino-acid biosynthesis; L-lysine biosynthesis via DAP pathway; DL-2,6-diaminopimelate from LL-2,6-diaminopimelate: step 1/1. In terms of biological role, catalyzes the stereoinversion of LL-2,6-diaminopimelate (L,L-DAP) to meso-diaminopimelate (meso-DAP), a precursor of L-lysine and an essential component of the bacterial peptidoglycan. This Nitrosomonas europaea (strain ATCC 19718 / CIP 103999 / KCTC 2705 / NBRC 14298) protein is Diaminopimelate epimerase.